We begin with the raw amino-acid sequence, 79 residues long: Short neurotoxin 6 (79 aa).

An N-terminal signal peptide occupies residues 1–21 (MKTLLLTLVMVTIMCLDLGYT). Intrachain disulfides connect cysteine 24/cysteine 41, cysteine 34/cysteine 59, cysteine 63/cysteine 71, and cysteine 72/cysteine 77.

It belongs to the three-finger toxin family. Short-chain subfamily. Type III alpha-neurotoxin sub-subfamily. In terms of tissue distribution, expressed by the venom gland.

It is found in the secreted. Its function is as follows. Binds with high affinity to muscle nicotinic acetylcholine receptor (nAChR) and hinders acetylcholine binding to the receptor, thereby impairing neuromuscular transmission. Competes with the binding of alpha-bungarotoxin on muscle AChR (from Torpedo) with an IC(50) of 0.18 uM. Causes muscle paralysis, spasms and increased respiration. In Pseudonaja textilis (Eastern brown snake), this protein is Short neurotoxin 6.